Consider the following 108-residue polypeptide: Thiosulfate sulfurtransferase GlpE (108 aa).

The Rhodanese domain maps to 17 to 105; it reads QEKEAVLVDI…WQRQFPAEVA (89 aa). Cysteine 65 functions as the Cysteine persulfide intermediate in the catalytic mechanism.

It belongs to the GlpE family.

It is found in the cytoplasm. It catalyses the reaction thiosulfate + hydrogen cyanide = thiocyanate + sulfite + 2 H(+). The enzyme catalyses thiosulfate + [thioredoxin]-dithiol = [thioredoxin]-disulfide + hydrogen sulfide + sulfite + 2 H(+). Functionally, transferase that catalyzes the transfer of sulfur from thiosulfate to thiophilic acceptors such as cyanide or dithiols. May function in a CysM-independent thiosulfate assimilation pathway by catalyzing the conversion of thiosulfate to sulfite, which can then be used for L-cysteine biosynthesis. The chain is Thiosulfate sulfurtransferase GlpE from Escherichia coli O45:K1 (strain S88 / ExPEC).